The chain runs to 586 residues: Phosphomethylpyrimidine synthase (586 aa).

The tract at residues 1–58 (MKQSVSAEQIELKSSLPGSKKVYVDGPREGMKVPMREIEQSDTNGVPNPPIRVYDTSG) is disordered. Residues 22 to 39 (VYVDGPREGMKVPMREIE) show a composition bias toward basic and acidic residues. Residues Asn193, Met222, Tyr251, His287, 307–309 (SRG), 348–351 (DGLR), and Glu387 contribute to the substrate site. His391 contributes to the Zn(2+) binding site. Tyr414 is a substrate binding site. His455 contacts Zn(2+). The [4Fe-4S] cluster site is built by Cys535, Cys538, and Cys543.

Belongs to the ThiC family. [4Fe-4S] cluster is required as a cofactor.

The catalysed reaction is 5-amino-1-(5-phospho-beta-D-ribosyl)imidazole + S-adenosyl-L-methionine = 4-amino-2-methyl-5-(phosphooxymethyl)pyrimidine + CO + 5'-deoxyadenosine + formate + L-methionine + 3 H(+). It functions in the pathway cofactor biosynthesis; thiamine diphosphate biosynthesis. Its function is as follows. Catalyzes the synthesis of the hydroxymethylpyrimidine phosphate (HMP-P) moiety of thiamine from aminoimidazole ribotide (AIR) in a radical S-adenosyl-L-methionine (SAM)-dependent reaction. The polypeptide is Phosphomethylpyrimidine synthase (Bacillus anthracis (strain A0248)).